The chain runs to 103 residues: Small ribosomal subunit protein uS10 (103 aa).

The protein belongs to the universal ribosomal protein uS10 family. In terms of assembly, part of the 30S ribosomal subunit.

Involved in the binding of tRNA to the ribosomes. This Bordetella avium (strain 197N) protein is Small ribosomal subunit protein uS10.